A 301-amino-acid polypeptide reads, in one-letter code: Cutinase (301 aa).

A signal peptide spans 1–40 (MAVMTPRRERSSLLSRALQVTAAAATALVTAVSLAAPAHA). Residue Y100 participates in poly(ethylene terephthalate) binding. S170 functions as the Nucleophile in the catalytic mechanism. The poly(ethylene terephthalate) site is built by M171 and W195. Catalysis depends on charge relay system residues D216 and H248. Residues C281 and C299 are joined by a disulfide bond.

The protein belongs to the AB hydrolase superfamily.

Its subcellular location is the secreted. It localises to the periplasm. The enzyme catalyses a butanoate ester + H2O = an aliphatic alcohol + butanoate + H(+). The catalysed reaction is (ethylene terephthalate)(n) + H2O = (ethylene terephthalate)(n-1) + 4-[(2-hydroxyethoxy)carbonyl]benzoate + H(+). It catalyses the reaction cutin + H2O = cutin monomers.. Activated by magnesium ions. Activated by calcium ions. Inhibited by the serine hydrolase inhibitor phenylmethanesulfonyl fluoride (PMSF). Functionally, catalyzes the hydrolysis of cutin, a polyester that forms the structure of plant cuticle. Shows esterase activity towards p-nitrophenol-linked aliphatic esters (pNP-aliphatic esters). Also hydrolyzes the triglyceride triolein. Capable of degrading the plastic poly(ethylene terephthalate) (PET), the most abundant polyester plastic in the world. This Thermobifida fusca (strain YX) protein is Cutinase.